The chain runs to 86 residues: MSKQPVSNVRAIQANINIPMGAFRPGAGQPPRRKECTPEVEEGVPPTSDEEKKPIPGAKKLPGPAVNLSEIQNIKSELKYVPKAEQ.

The segment at 20 to 64 (MGAFRPGAGQPPRRKECTPEVEEGVPPTSDEEKKPIPGAKKLPGP) is disordered.

The protein belongs to the SMPX family.

In terms of biological role, plays a role in the regulatory network through which muscle cells coordinate their structural and functional states during growth, adaptation, and repair. The sequence is that of Small muscular protein (SMPX) from Pongo abelii (Sumatran orangutan).